The chain runs to 179 residues: Mediator of RNA polymerase II transcription subunit 28 (179 aa).

Residues 1–43 (MASSMCGMFPGQQPPGSLPPPGPGGPGQPGLLTGTPGNRGANN) are disordered. The span at 12–26 (QQPPGSLPPPGPGGP) shows a compositional bias: pro residues. A coiled-coil region spans residues 109–139 (EQVEKEDASELKNELQRKEMLIQKHLAKIHH).

The protein belongs to the Mediator complex subunit 28 family. Component of the Mediator complex.

The protein resides in the nucleus. Functionally, component of the Mediator complex, a coactivator involved in the regulated transcription of nearly all RNA polymerase II-dependent genes. Mediator functions as a bridge to convey information from gene-specific regulatory proteins to the basal RNA polymerase II transcription machinery. Mediator is recruited to promoters by direct interactions with regulatory proteins and serves as a scaffold for the assembly of a functional preinitiation complex with RNA polymerase II and the general transcription factors. The protein is Mediator of RNA polymerase II transcription subunit 28 (med28) of Danio rerio (Zebrafish).